We begin with the raw amino-acid sequence, 317 residues long: L-lactate dehydrogenase 1 (317 aa).

Residues Val17, Asp38, Lys43, Tyr69, and 83 to 84 contribute to the NAD(+) site; that span reads GA. 2 residues coordinate substrate: Gln86 and Arg92. NAD(+)-binding positions include Ser105, 122-124, and Ser147; that span reads ATN. 124 to 127 contacts substrate; sequence NPVD. 152–155 is a substrate binding site; sequence DSAR. The active-site Proton acceptor is the His179. Tyr223 bears the Phosphotyrosine mark. Thr232 is a substrate binding site.

Belongs to the LDH/MDH superfamily. LDH family. In terms of assembly, homotetramer.

It is found in the cytoplasm. It catalyses the reaction (S)-lactate + NAD(+) = pyruvate + NADH + H(+). It functions in the pathway fermentation; pyruvate fermentation to lactate; (S)-lactate from pyruvate: step 1/1. Its function is as follows. Catalyzes the conversion of lactate to pyruvate (Potential). Appears to be the primary factor that allows S.aureus growth during nitrosative stress in both aerobically and anaerobically cultured cells. The polypeptide is L-lactate dehydrogenase 1 (Staphylococcus aureus (strain bovine RF122 / ET3-1)).